The chain runs to 329 residues: Malate dehydrogenase (329 aa).

12–18 (GAAGQIG) is a binding site for NAD(+). Residues arginine 93 and arginine 99 each coordinate substrate. Residues asparagine 106, glutamine 113, and 130–132 (TGN) each bind NAD(+). The substrate site is built by asparagine 132 and arginine 163. The Proton acceptor role is filled by histidine 188.

It belongs to the LDH/MDH superfamily. MDH type 2 family.

The enzyme catalyses (S)-malate + NAD(+) = oxaloacetate + NADH + H(+). In terms of biological role, catalyzes the reversible oxidation of malate to oxaloacetate. The polypeptide is Malate dehydrogenase (Mycobacterium bovis (strain ATCC BAA-935 / AF2122/97)).